Consider the following 226-residue polypeptide: Enolase-phosphatase E1 (226 aa).

Positions 9 and 11 each coordinate Mg(2+). Substrate contacts are provided by residues 115–116 (SS) and K160. D185 is a Mg(2+) binding site.

It belongs to the HAD-like hydrolase superfamily. MasA/MtnC family. Monomer. The cofactor is Mg(2+).

It localises to the cytoplasm. Its subcellular location is the nucleus. It catalyses the reaction 5-methylsulfanyl-2,3-dioxopentyl phosphate + H2O = 1,2-dihydroxy-5-(methylsulfanyl)pent-1-en-3-one + phosphate. It participates in amino-acid biosynthesis; L-methionine biosynthesis via salvage pathway; L-methionine from S-methyl-5-thio-alpha-D-ribose 1-phosphate: step 3/6. Its pathway is amino-acid biosynthesis; L-methionine biosynthesis via salvage pathway; L-methionine from S-methyl-5-thio-alpha-D-ribose 1-phosphate: step 4/6. Bifunctional enzyme that catalyzes the enolization of 2,3-diketo-5-methylthiopentyl-1-phosphate (DK-MTP-1-P) into the intermediate 2-hydroxy-3-keto-5-methylthiopentenyl-1-phosphate (HK-MTPenyl-1-P), which is then dephosphorylated to form the acireductone 1,2-dihydroxy-3-keto-5-methylthiopentene (DHK-MTPene). The chain is Enolase-phosphatase E1 from Zygosaccharomyces rouxii (strain ATCC 2623 / CBS 732 / NBRC 1130 / NCYC 568 / NRRL Y-229).